A 370-amino-acid polypeptide reads, in one-letter code: Glycerophosphodiester phosphodiesterase GDPD3 (370 aa).

A GP-PDE domain is found at F35–I322.

It belongs to the glycerophosphoryl diester phosphodiesterase family. In terms of tissue distribution, expressed in flowers and siliques.

The catalysed reaction is a sn-glycero-3-phosphodiester + H2O = an alcohol + sn-glycerol 3-phosphate + H(+). The chain is Glycerophosphodiester phosphodiesterase GDPD3 from Arabidopsis thaliana (Mouse-ear cress).